The chain runs to 406 residues: Serine/threonine transporter SstT (406 aa).

9 helical membrane passes run 15-35 (LVLQ…VSPS), 47-67 (FVGA…AASI), 81-101 (IIAM…VLSF), 140-160 (ALMS…GLAL), 191-211 (FGIF…ALAG), 215-235 (LLVV…PAMV), 289-309 (IPLG…TLTL), 315-335 (MGIE…AVSA), and 362-382 (IAMQ…SAET).

Belongs to the dicarboxylate/amino acid:cation symporter (DAACS) (TC 2.A.23) family.

The protein resides in the cell inner membrane. The enzyme catalyses L-serine(in) + Na(+)(in) = L-serine(out) + Na(+)(out). The catalysed reaction is L-threonine(in) + Na(+)(in) = L-threonine(out) + Na(+)(out). In terms of biological role, involved in the import of serine and threonine into the cell, with the concomitant import of sodium (symport system). The sequence is that of Serine/threonine transporter SstT from Vibrio vulnificus (strain CMCP6).